Reading from the N-terminus, the 265-residue chain is Large ribosomal subunit protein bL9m (265 aa).

Residues 1-49 constitute a mitochondrion transit peptide; that stretch reads MAASVAPGVRTLWWAGAAWLRQGGIRELFRPRIEGSTPGRDFSLSHYQS.

Belongs to the bacterial ribosomal protein bL9 family. Component of the mitochondrial ribosome large subunit (39S) which comprises a 16S rRNA and about 50 distinct proteins.

It localises to the mitochondrion. The protein is Large ribosomal subunit protein bL9m (Mrpl9) of Mus musculus (Mouse).